A 130-amino-acid polypeptide reads, in one-letter code: MNFNDIETMVKSKFKDIKKHAEEIAHEIEVRSGYLRKAEQYKRLEFNLSIALDDVESTAKDVQTAKSSANKDSVSVKGKAPNTLYIEKRNLMKQKLEMLGEDIDKNKESLQKAKGIAGEKASEYFNKAMN.

It belongs to the EsxC family. Forms both homodimers and heterodimers with EsxA. Homodimerization is calcium-dependent.

It localises to the secreted. Implements its pathogenic function during infection. The chain is Type VII secretion system extracellular protein C from Staphylococcus aureus (strain Mu50 / ATCC 700699).